We begin with the raw amino-acid sequence, 470 residues long: Putative dipeptidase TSTA_079200 (470 aa).

The chain crosses the membrane as a helical span at residues A40–F60. Zn(2+)-binding residues include H92 and D94. An intrachain disulfide couples C143 to C237. N188 is a glycosylation site (N-linked (GlcNAc...) asparagine). Position 208 (E208) interacts with Zn(2+). Residue H235 participates in substrate binding. Zn(2+) is bound by residues H279 and H300. Substrate contacts are provided by R311 and D371.

The protein belongs to the metallo-dependent hydrolases superfamily. Peptidase M19 family. Zn(2+) is required as a cofactor.

Its subcellular location is the membrane. The catalysed reaction is an L-aminoacyl-L-amino acid + H2O = 2 an L-alpha-amino acid. In terms of biological role, hydrolyzes a wide range of dipeptides. The polypeptide is Putative dipeptidase TSTA_079200 (Talaromyces stipitatus (strain ATCC 10500 / CBS 375.48 / QM 6759 / NRRL 1006) (Penicillium stipitatum)).